The chain runs to 436 residues: Phosphomethylpyrimidine synthase (436 aa).

Residues asparagine 69, methionine 98, tyrosine 127, histidine 163, 185–187, 226–229, and glutamate 265 each bind substrate; these read SRG and DACR. Histidine 269 serves as a coordination point for Zn(2+). Tyrosine 292 is a substrate binding site. Zn(2+) is bound at residue histidine 333. 3 residues coordinate [4Fe-4S] cluster: cysteine 409, cysteine 412, and cysteine 416.

The protein belongs to the ThiC family. [4Fe-4S] cluster serves as cofactor.

The catalysed reaction is 5-amino-1-(5-phospho-beta-D-ribosyl)imidazole + S-adenosyl-L-methionine = 4-amino-2-methyl-5-(phosphooxymethyl)pyrimidine + CO + 5'-deoxyadenosine + formate + L-methionine + 3 H(+). The protein operates within cofactor biosynthesis; thiamine diphosphate biosynthesis. In terms of biological role, catalyzes the synthesis of the hydroxymethylpyrimidine phosphate (HMP-P) moiety of thiamine from aminoimidazole ribotide (AIR) in a radical S-adenosyl-L-methionine (SAM)-dependent reaction. The chain is Phosphomethylpyrimidine synthase from Clostridium acetobutylicum (strain ATCC 824 / DSM 792 / JCM 1419 / IAM 19013 / LMG 5710 / NBRC 13948 / NRRL B-527 / VKM B-1787 / 2291 / W).